The sequence spans 195 residues: Probable GTP-binding protein EngB (195 aa).

Residues 22–195 (GRPEVALAGR…WAALLPFVAS (174 aa)) enclose the EngB-type G domain. GTP contacts are provided by residues 30 to 37 (GRSNVGKS), 57 to 61 (GKTQT), 75 to 78 (DVPG), 142 to 145 (TKAD), and 174 to 176 (FSA). Mg(2+) is bound by residues Ser37 and Thr59.

This sequence belongs to the TRAFAC class TrmE-Era-EngA-EngB-Septin-like GTPase superfamily. EngB GTPase family. Mg(2+) serves as cofactor.

Functionally, necessary for normal cell division and for the maintenance of normal septation. This Geobacillus kaustophilus (strain HTA426) protein is Probable GTP-binding protein EngB.